The primary structure comprises 367 residues: MTDNSQVKVIVGMSGGVDSSVSAYLLQQQGYLVEGLFMKNWEEDDTDQYCAAAQDLEDAQSVCDKLGIPLHTINFAAEYWDNVFEHFLAEYKAGRTPNPDIMCNKEIKFKAFLEFAAEDLGADYIATGHYVRRREVDGHVQLLRGLDNNKDQSYFLYAIGEKQIAKSLFPVGELEKPEVRRIAEQQDLITHNKKDSTGICFIGERKFTDFLQEYLPAQPGDIVTPTGEVIGQHQGLMYHTLGQRKGLGIGGLQNSNENPWYVVGKDMDNNRLLVAQGADHPALFSYGLIAKQCDWVDRTPKKSTFRCTVKTRYRQQDIPCTVTPLDDDTLKVIFDTAQAAVTPGQSAVFYNDEVCLGGAIIEEHLQK.

ATP-binding positions include 12–19 (GMSGGVDS) and methionine 38. Residues 98 to 100 (NPD) are interaction with target base in tRNA. The Nucleophile role is filled by cysteine 103. Cysteine 103 and cysteine 200 form a disulfide bridge. Glycine 128 lines the ATP pocket. Positions 150 to 152 (KDQ) are interaction with tRNA. The active-site Cysteine persulfide intermediate is cysteine 200. The interval 312–313 (RY) is interaction with tRNA.

It belongs to the MnmA/TRMU family.

It is found in the cytoplasm. The enzyme catalyses S-sulfanyl-L-cysteinyl-[protein] + uridine(34) in tRNA + AH2 + ATP = 2-thiouridine(34) in tRNA + L-cysteinyl-[protein] + A + AMP + diphosphate + H(+). Its function is as follows. Catalyzes the 2-thiolation of uridine at the wobble position (U34) of tRNA, leading to the formation of s(2)U34. This Psychromonas ingrahamii (strain DSM 17664 / CCUG 51855 / 37) protein is tRNA-specific 2-thiouridylase MnmA.